Here is a 127-residue protein sequence, read N- to C-terminus: Large ribosomal subunit protein uL22 (127 aa).

It belongs to the universal ribosomal protein uL22 family. As to quaternary structure, part of the 50S ribosomal subunit.

In terms of biological role, this protein binds specifically to 23S rRNA; its binding is stimulated by other ribosomal proteins, e.g. L4, L17, and L20. It is important during the early stages of 50S assembly. It makes multiple contacts with different domains of the 23S rRNA in the assembled 50S subunit and ribosome. Its function is as follows. The globular domain of the protein is located near the polypeptide exit tunnel on the outside of the subunit, while an extended beta-hairpin is found that lines the wall of the exit tunnel in the center of the 70S ribosome. In Rhizorhabdus wittichii (strain DSM 6014 / CCUG 31198 / JCM 15750 / NBRC 105917 / EY 4224 / RW1) (Sphingomonas wittichii), this protein is Large ribosomal subunit protein uL22.